The chain runs to 247 residues: LHFPL tetraspan subfamily member 4 protein (247 aa).

The next 4 helical transmembrane spans lie at 22 to 42, 97 to 117, 127 to 147, and 178 to 198; these read IGVLWAIFTICFAIINVVVFI, FFVLLSMVLILGCITCFALFF, ICAWMQLLAALCLVLGCMIFP, and ILAIIGILNALILSFLAFVLG.

Belongs to the LHFP family. In terms of assembly, interacts with GABA(A) receptor subunits. Interacts with GABRB3. Interacts with GABRA2. Interacts with GABRG2. Interacts with GABRA1. Identified in a complex of 720 kDa composed of LHFPL4, NLGN2, GABRA1, GABRB2, GABRG2 and GABRB3. Interacts with NLGN2; leading to mutual regulation of protein level and synaptic clustering. As to expression, highly expressed in the brain, including the cortex, hippocampus, midbrain, olfactory bulb pona plus medulla (at protein level). Expressed in the in the cerebellar granular layer and in granular layer. Colocalized with GPHN at inhibitory synapses. Weakly expressed in heart, testis, lung, intestine, vagina, ovary and uterus.

It is found in the cell projection. It localises to the dendrite. Its subcellular location is the postsynaptic cell membrane. Its function is as follows. Plays a role in the regulation of inhibitory synapse formation and function by being involved in maintening gamma-aminobutyric acid receptors (GABAARs) clustering and their associated scaffold proteins at inhibitory synaptic sites. Acts in concert with NLGN2 to recruit or stabilize GABAARs. The polypeptide is LHFPL tetraspan subfamily member 4 protein (Mus musculus (Mouse)).